The chain runs to 507 residues: Maturase K (507 aa).

The protein belongs to the intron maturase 2 family. MatK subfamily.

The protein localises to the plastid. It is found in the chloroplast. Functionally, usually encoded in the trnK tRNA gene intron. Probably assists in splicing its own and other chloroplast group II introns. The polypeptide is Maturase K (Lens ervoides (Beaded lentil)).